Consider the following 618-residue polypeptide: 1-deoxy-D-xylulose-5-phosphate synthase (618 aa).

Residues His74 and 115-117 (GHS) contribute to the thiamine diphosphate site. Asp146 contributes to the Mg(2+) binding site. Residues 147 to 148 (GA), Asn175, Tyr286, and Glu366 each bind thiamine diphosphate. Position 175 (Asn175) interacts with Mg(2+).

It belongs to the transketolase family. DXPS subfamily. Homodimer. The cofactor is Mg(2+). It depends on thiamine diphosphate as a cofactor.

The enzyme catalyses D-glyceraldehyde 3-phosphate + pyruvate + H(+) = 1-deoxy-D-xylulose 5-phosphate + CO2. It functions in the pathway metabolic intermediate biosynthesis; 1-deoxy-D-xylulose 5-phosphate biosynthesis; 1-deoxy-D-xylulose 5-phosphate from D-glyceraldehyde 3-phosphate and pyruvate: step 1/1. Functionally, catalyzes the acyloin condensation reaction between C atoms 2 and 3 of pyruvate and glyceraldehyde 3-phosphate to yield 1-deoxy-D-xylulose-5-phosphate (DXP). The chain is 1-deoxy-D-xylulose-5-phosphate synthase from Clostridium tetani (strain Massachusetts / E88).